The primary structure comprises 460 residues: Kynurenine 3-monooxygenase (460 aa).

FAD-binding positions include Val-13, 32–34 (DFR), and Ala-53. L-kynurenine-binding residues include Arg-83 and Tyr-97. FAD-binding positions include Arg-109, Leu-133, Tyr-195, Asp-314, and 325–328 (QGMN). Asn-373 and Tyr-408 together coordinate L-kynurenine.

This sequence belongs to the aromatic-ring hydroxylase family. KMO subfamily. FAD is required as a cofactor.

It is found in the mitochondrion outer membrane. The catalysed reaction is L-kynurenine + NADPH + O2 + H(+) = 3-hydroxy-L-kynurenine + NADP(+) + H2O. The protein operates within cofactor biosynthesis; NAD(+) biosynthesis; quinolinate from L-kynurenine: step 1/3. Catalyzes the hydroxylation of L-kynurenine (L-Kyn) to form 3-hydroxy-L-kynurenine (L-3OHKyn). Required for synthesis of quinolinic acid. The protein is Kynurenine 3-monooxygenase of Saccharomyces cerevisiae (strain ATCC 204508 / S288c) (Baker's yeast).